Reading from the N-terminus, the 89-residue chain is UPF0297 protein SEQ_2150 (89 aa).

Belongs to the UPF0297 family.

The sequence is that of UPF0297 protein SEQ_2150 from Streptococcus equi subsp. equi (strain 4047).